Here is a 243-residue protein sequence, read N- to C-terminus: UMP-CMP kinase 1 (243 aa).

Residue 29–34 (GSGKGT) participates in ATP binding. Positions 49-78 (SAGDLLREEAKYDTEQGTMIKNLMNEGKLV) are NMP. A ribonucleoside 5'-phosphate is bound by residues Arg55, 76-78 (KLV), and 103-106 (GFPR). Asn110 is a CMP binding site. The interval 141–149 (NRNQGRDDD) is LID. ATP is bound at residue Arg142. The a ribonucleoside 5'-phosphate site is built by Arg146 and Arg157. Arg185 provides a ligand contact to ATP.

The protein belongs to the adenylate kinase family. UMP-CMP kinase subfamily. As to quaternary structure, monomer. Mg(2+) is required as a cofactor.

The protein localises to the cytoplasm. It is found in the nucleus. The enzyme catalyses UMP + ATP = UDP + ADP. It catalyses the reaction CMP + ATP = CDP + ADP. It carries out the reaction dCMP + ATP = dCDP + ADP. In terms of biological role, catalyzes the phosphorylation of pyrimidine nucleoside monophosphates at the expense of ATP. Plays an important role in de novo pyrimidine nucleotide biosynthesis. Has preference for UMP and CMP as phosphate acceptors. This is UMP-CMP kinase 1 from Oryza sativa subsp. japonica (Rice).